The following is a 176-amino-acid chain: ATP-dependent protease subunit HslV (176 aa).

Thr2 is an active-site residue. Residues Ser157, Cys160, and Thr163 each contribute to the Na(+) site.

This sequence belongs to the peptidase T1B family. HslV subfamily. A double ring-shaped homohexamer of HslV is capped on each side by a ring-shaped HslU homohexamer. The assembly of the HslU/HslV complex is dependent on binding of ATP.

Its subcellular location is the cytoplasm. It carries out the reaction ATP-dependent cleavage of peptide bonds with broad specificity.. Its activity is regulated as follows. Allosterically activated by HslU binding. Functionally, protease subunit of a proteasome-like degradation complex believed to be a general protein degrading machinery. This chain is ATP-dependent protease subunit HslV, found in Buchnera aphidicola subsp. Baizongia pistaciae (strain Bp).